The sequence spans 449 residues: UPF0761 membrane protein Cpha266_1653 (449 aa).

Helical transmembrane passes span 77 to 97 (LLSL…FPVF), 133 to 153 (SVPL…ISTI), 173 to 193 (FTLY…SLVA), 214 to 234 (LLSF…YMLV), 244 to 264 (AVYG…WFVF), and 277 to 297 (GALS…VVVL).

The protein belongs to the UPF0761 family.

It is found in the cell inner membrane. This Chlorobium phaeobacteroides (strain DSM 266 / SMG 266 / 2430) protein is UPF0761 membrane protein Cpha266_1653.